Consider the following 1024-residue polypeptide: Error-prone DNA polymerase (1024 aa).

It belongs to the DNA polymerase type-C family. DnaE2 subfamily.

Its subcellular location is the cytoplasm. It catalyses the reaction DNA(n) + a 2'-deoxyribonucleoside 5'-triphosphate = DNA(n+1) + diphosphate. DNA polymerase involved in damage-induced mutagenesis and translesion synthesis (TLS). It is not the major replicative DNA polymerase. This is Error-prone DNA polymerase from Vibrio parahaemolyticus serotype O3:K6 (strain RIMD 2210633).